We begin with the raw amino-acid sequence, 385 residues long: Cyclin-A3-2 (385 aa).

Positions 1-110 (MADKENSTPA…STSTASPSSG (110 aa)) are disordered. Low complexity-rich tracts occupy residues 7–41 (STPA…GAPP), 74–88 (PSSK…AAAP), and 96–110 (PVSS…PSSG).

It belongs to the cyclin family. Cyclin AB subfamily.

The chain is Cyclin-A3-2 (CYCA3-2) from Oryza sativa subsp. japonica (Rice).